We begin with the raw amino-acid sequence, 116 residues long: POU domain, class 4, transcription factor 1 (116 aa).

Residues 1–54 (VTQADVGSALANLKIPGVGSLSQSTICRFESLTLSHNNMIALKPILQAWLEEAE) enclose the POU-specific domain. The segment at 56–79 (AQREKMNKPELFNGGEKKRKRTSI) is disordered. The homeobox DNA-binding region spans 72–116 (KKRKRTSIAAPEKRSLEAYFAVQPRPSSEKIAAIAEKLDLKKNVV).

Belongs to the POU transcription factor family. Class-4 subfamily.

The protein resides in the nucleus. It is found in the cytoplasm. Its function is as follows. Multifunctional transcription factor with different regions mediating its different effects. Acts by binding (via its C-terminal domain) to sequences related to the consensus octamer motif 5'-ATGCAAAT-3' in the regulatory regions of its target genes. Regulates the expression of specific genes involved in differentiation and survival within a subset of neuronal lineages. It has been shown that activation of some of these genes requires its N-terminal domain, maybe through a neuronal-specific cofactor. The polypeptide is POU domain, class 4, transcription factor 1 (POU4F1) (Gallus gallus (Chicken)).